Reading from the N-terminus, the 565-residue chain is Protein nucleotidyltransferase YdiU (565 aa).

ATP is bound by residues Gly-118, Gly-120, Arg-121, Lys-141, Asp-153, Gly-154, Arg-211, and Arg-218. The active-site Proton acceptor is the Asp-290. Mg(2+) contacts are provided by Asn-291 and Asp-300. Asp-300 provides a ligand contact to ATP.

The protein belongs to the SELO family. Requires Mg(2+) as cofactor. Mn(2+) serves as cofactor.

The enzyme catalyses L-seryl-[protein] + ATP = 3-O-(5'-adenylyl)-L-seryl-[protein] + diphosphate. It catalyses the reaction L-threonyl-[protein] + ATP = 3-O-(5'-adenylyl)-L-threonyl-[protein] + diphosphate. The catalysed reaction is L-tyrosyl-[protein] + ATP = O-(5'-adenylyl)-L-tyrosyl-[protein] + diphosphate. It carries out the reaction L-histidyl-[protein] + UTP = N(tele)-(5'-uridylyl)-L-histidyl-[protein] + diphosphate. The enzyme catalyses L-seryl-[protein] + UTP = O-(5'-uridylyl)-L-seryl-[protein] + diphosphate. It catalyses the reaction L-tyrosyl-[protein] + UTP = O-(5'-uridylyl)-L-tyrosyl-[protein] + diphosphate. Nucleotidyltransferase involved in the post-translational modification of proteins. It can catalyze the addition of adenosine monophosphate (AMP) or uridine monophosphate (UMP) to a protein, resulting in modifications known as AMPylation and UMPylation. This is Protein nucleotidyltransferase YdiU from Nitrosospira multiformis (strain ATCC 25196 / NCIMB 11849 / C 71).